The sequence spans 446 residues: Phosphoglucosamine mutase (446 aa).

S99 (phosphoserine intermediate) is an active-site residue. Positions 99, 242, 244, and 246 each coordinate Mg(2+). S99 is subject to Phosphoserine.

Belongs to the phosphohexose mutase family. The cofactor is Mg(2+). Post-translationally, activated by phosphorylation.

It catalyses the reaction alpha-D-glucosamine 1-phosphate = D-glucosamine 6-phosphate. Its function is as follows. Catalyzes the conversion of glucosamine-6-phosphate to glucosamine-1-phosphate. The protein is Phosphoglucosamine mutase of Campylobacter hominis (strain ATCC BAA-381 / DSM 21671 / CCUG 45161 / LMG 19568 / NCTC 13146 / CH001A).